A 68-amino-acid chain; its full sequence is MGAAYHFMGKAIPPHQLAIGTLGLLGLLVVPNPFKSAKPKTVDIKTDNKDEEKFIENYLKKHSEKQDA.

The chain crosses the membrane as a helical span at residues 15 to 31 (HQLAIGTLGLLGLLVVP).

The protein belongs to the ATP19 family. In terms of assembly, F-type ATPases have 2 components, CF(1) - the catalytic core - and CF(0) - the membrane proton channel. In yeast, the dimeric form of ATP synthase consists of 17 polypeptides: alpha, beta, gamma, delta, epsilon, 4 (B), 5 (OSCP), 6 (A), 8, 9 (C), d, E (Tim11), f, g, h, i/j and k.

It localises to the mitochondrion inner membrane. Mitochondrial membrane ATP synthase (F(1)F(0) ATP synthase or Complex V) produces ATP from ADP in the presence of a proton gradient across the membrane which is generated by electron transport complexes of the respiratory chain. F-type ATPases consist of two structural domains, F(1) - containing the extramembraneous catalytic core and F(0) - containing the membrane proton channel, linked together by a central stalk and a peripheral stalk. During catalysis, ATP synthesis in the catalytic domain of F(1) is coupled via a rotary mechanism of the central stalk subunits to proton translocation. Part of the complex F(0) domain. Minor subunit located with subunit a in the membrane. The K chain binds the dimeric form by interacting with the G and E chains. The chain is ATP synthase subunit K, mitochondrial (ATP19) from Saccharomyces cerevisiae (strain ATCC 204508 / S288c) (Baker's yeast).